The primary structure comprises 135 residues: Transcription antitermination protein NusB (135 aa).

Belongs to the NusB family.

In terms of biological role, involved in transcription antitermination. Required for transcription of ribosomal RNA (rRNA) genes. Binds specifically to the boxA antiterminator sequence of the ribosomal RNA (rrn) operons. The chain is Transcription antitermination protein NusB from Lacticaseibacillus paracasei (strain ATCC 334 / BCRC 17002 / CCUG 31169 / CIP 107868 / KCTC 3260 / NRRL B-441) (Lactobacillus paracasei).